Here is a 402-residue protein sequence, read N- to C-terminus: GTPase HflX (402 aa).

The Hflx-type G domain maps to 181 to 350; it reads DTVGLIGYTN…MIIEHLNLSI (170 aa). Residues 187-194, 212-216, 233-236, 300-303, and 328-330 each bind GTP; these read GYTNAGKT, FTTLT, DTVG, NKVD, and SAK. Mg(2+)-binding residues include Thr-194 and Thr-214.

The protein belongs to the TRAFAC class OBG-HflX-like GTPase superfamily. HflX GTPase family. Monomer. Associates with the 50S ribosomal subunit. Mg(2+) serves as cofactor.

Its subcellular location is the cytoplasm. GTPase that associates with the 50S ribosomal subunit and may have a role during protein synthesis or ribosome biogenesis. The sequence is that of GTPase HflX from Methanocaldococcus jannaschii (strain ATCC 43067 / DSM 2661 / JAL-1 / JCM 10045 / NBRC 100440) (Methanococcus jannaschii).